The sequence spans 486 residues: Cardiolipin synthase A (486 aa).

2 helical membrane passes run 3-23 (TFYT…IAGV) and 38-58 (MTWL…YFAF). 2 consecutive PLD phosphodiesterase domains span residues 219-246 (MDLR…VDPR) and 399-426 (EDGL…DMRS). Active-site residues include histidine 224, lysine 226, aspartate 231, histidine 404, lysine 406, and aspartate 411.

This sequence belongs to the phospholipase D family. Cardiolipin synthase subfamily. ClsA sub-subfamily.

Its subcellular location is the cell inner membrane. The catalysed reaction is 2 a 1,2-diacyl-sn-glycero-3-phospho-(1'-sn-glycerol) = a cardiolipin + glycerol. In terms of biological role, catalyzes the reversible phosphatidyl group transfer from one phosphatidylglycerol molecule to another to form cardiolipin (CL) (diphosphatidylglycerol) and glycerol. The chain is Cardiolipin synthase A from Proteus mirabilis (strain HI4320).